The chain runs to 469 residues: Sulfate adenylyltransferase subunit 1 (469 aa).

The 216-residue stretch at 22 to 237 folds into the tr-type G domain; the sequence is KEVLRFITCG…LEEVPVKSEE (216 aa). Positions 31-38 are G1; it reads GSVDDGKS. 31-38 is a GTP binding site; that stretch reads GSVDDGKS. The G2 stretch occupies residues 89–93; the sequence is GITID. The interval 110–113 is G3; the sequence is DTPG. GTP-binding positions include 110–114 and 165–168; these read DTPGH and NKMD. Positions 165-168 are G4; the sequence is NKMD. The G5 stretch occupies residues 202-204; that stretch reads SAK.

The protein belongs to the TRAFAC class translation factor GTPase superfamily. Classic translation factor GTPase family. CysN/NodQ subfamily. Heterodimer composed of CysD, the smaller subunit, and CysN.

It carries out the reaction sulfate + ATP + H(+) = adenosine 5'-phosphosulfate + diphosphate. It functions in the pathway sulfur metabolism; hydrogen sulfide biosynthesis; sulfite from sulfate: step 1/3. Functionally, with CysD forms the ATP sulfurylase (ATPS) that catalyzes the adenylation of sulfate producing adenosine 5'-phosphosulfate (APS) and diphosphate, the first enzymatic step in sulfur assimilation pathway. APS synthesis involves the formation of a high-energy phosphoric-sulfuric acid anhydride bond driven by GTP hydrolysis by CysN coupled to ATP hydrolysis by CysD. This Methylorubrum extorquens (strain PA1) (Methylobacterium extorquens) protein is Sulfate adenylyltransferase subunit 1.